The primary structure comprises 292 residues: Ribosomal protein L11 methyltransferase (292 aa).

The S-adenosyl-L-methionine site is built by T136, G159, D181, and N228.

It belongs to the methyltransferase superfamily. PrmA family.

It is found in the cytoplasm. It catalyses the reaction L-lysyl-[protein] + 3 S-adenosyl-L-methionine = N(6),N(6),N(6)-trimethyl-L-lysyl-[protein] + 3 S-adenosyl-L-homocysteine + 3 H(+). Functionally, methylates ribosomal protein L11. The protein is Ribosomal protein L11 methyltransferase of Rhizobium johnstonii (strain DSM 114642 / LMG 32736 / 3841) (Rhizobium leguminosarum bv. viciae).